The primary structure comprises 124 residues: Large ribosomal subunit protein bL12 (124 aa).

Belongs to the bacterial ribosomal protein bL12 family. As to quaternary structure, homodimer. Part of the ribosomal stalk of the 50S ribosomal subunit. Forms a multimeric L10(L12)X complex, where L10 forms an elongated spine to which 2 to 4 L12 dimers bind in a sequential fashion. Binds GTP-bound translation factors.

Forms part of the ribosomal stalk which helps the ribosome interact with GTP-bound translation factors. Is thus essential for accurate translation. In Ralstonia nicotianae (strain ATCC BAA-1114 / GMI1000) (Ralstonia solanacearum), this protein is Large ribosomal subunit protein bL12.